We begin with the raw amino-acid sequence, 425 residues long: Sucrose-phosphatase 1 (425 aa).

This sequence belongs to the sucrose phosphatase family. As to quaternary structure, homodimer. Requires Mg(2+) as cofactor.

It carries out the reaction sucrose 6(F)-phosphate + H2O = sucrose + phosphate. It participates in glycan biosynthesis; sucrose biosynthesis; sucrose from D-fructose 6-phosphate and UDP-alpha-D-glucose: step 2/2. Inhibited by EDTA. Functionally, catalyzes the final step of sucrose synthesis. This is Sucrose-phosphatase 1 (SPP1) from Nicotiana tabacum (Common tobacco).